The chain runs to 361 residues: Beta-hexosaminidase (361 aa).

Residues aspartate 69, arginine 77, arginine 144, and 174 to 175 (KH) each bind substrate. Residue histidine 187 is the Proton donor/acceptor of the active site. The active-site Nucleophile is aspartate 258.

Belongs to the glycosyl hydrolase 3 family. NagZ subfamily.

Its subcellular location is the cytoplasm. The catalysed reaction is Hydrolysis of terminal non-reducing N-acetyl-D-hexosamine residues in N-acetyl-beta-D-hexosaminides.. It functions in the pathway cell wall biogenesis; peptidoglycan recycling. In terms of biological role, plays a role in peptidoglycan recycling by cleaving the terminal beta-1,4-linked N-acetylglucosamine (GlcNAc) from peptide-linked peptidoglycan fragments, giving rise to free GlcNAc, anhydro-N-acetylmuramic acid and anhydro-N-acetylmuramic acid-linked peptides. This is Beta-hexosaminidase from Neisseria gonorrhoeae (strain ATCC 700825 / FA 1090).